Here is a 129-residue protein sequence, read N- to C-terminus: Small ribosomal subunit protein uS8 (129 aa).

Belongs to the universal ribosomal protein uS8 family. As to quaternary structure, part of the 30S ribosomal subunit. Contacts proteins S5 and S12.

Its function is as follows. One of the primary rRNA binding proteins, it binds directly to 16S rRNA central domain where it helps coordinate assembly of the platform of the 30S subunit. This is Small ribosomal subunit protein uS8 from Spiroplasma kunkelii.